The following is a 240-amino-acid chain: Putative cytochrome c-type biogenesis protein DbsD-like (240 aa).

Transmembrane regions (helical) follow at residues 32–52 (FVFF…ILPI), 74–94 (FFFC…ATLL), 104–124 (GIPV…LNIV), 149–169 (VGIG…LLIW), 176–196 (LFIG…PIII), and 218–238 (APFS…SSIL).

The protein belongs to the DsbD family.

It is found in the plastid. It localises to the chloroplast membrane. Could be involved in cytochrome c synthesis. This chain is Putative cytochrome c-type biogenesis protein DbsD-like, found in Porphyra purpurea (Red seaweed).